The sequence spans 404 residues: Probable tRNA sulfurtransferase (404 aa).

Residues 60-165 (EPVAEALKNV…DEAAYISHEE (106 aa)) form the THUMP domain. ATP contacts are provided by residues 183–184 (ML), 208–209 (HF), Arg265, Gly287, and Gln296.

This sequence belongs to the ThiI family.

Its subcellular location is the cytoplasm. The catalysed reaction is [ThiI sulfur-carrier protein]-S-sulfanyl-L-cysteine + a uridine in tRNA + 2 reduced [2Fe-2S]-[ferredoxin] + ATP + H(+) = [ThiI sulfur-carrier protein]-L-cysteine + a 4-thiouridine in tRNA + 2 oxidized [2Fe-2S]-[ferredoxin] + AMP + diphosphate. The enzyme catalyses [ThiS sulfur-carrier protein]-C-terminal Gly-Gly-AMP + S-sulfanyl-L-cysteinyl-[cysteine desulfurase] + AH2 = [ThiS sulfur-carrier protein]-C-terminal-Gly-aminoethanethioate + L-cysteinyl-[cysteine desulfurase] + A + AMP + 2 H(+). It functions in the pathway cofactor biosynthesis; thiamine diphosphate biosynthesis. Catalyzes the ATP-dependent transfer of a sulfur to tRNA to produce 4-thiouridine in position 8 of tRNAs, which functions as a near-UV photosensor. Also catalyzes the transfer of sulfur to the sulfur carrier protein ThiS, forming ThiS-thiocarboxylate. This is a step in the synthesis of thiazole, in the thiamine biosynthesis pathway. The sulfur is donated as persulfide by IscS. This is Probable tRNA sulfurtransferase from Streptococcus uberis (strain ATCC BAA-854 / 0140J).